A 299-amino-acid polypeptide reads, in one-letter code: Pyridoxal 5'-phosphate synthase subunit PdxS (299 aa).

Aspartate 24 is a binding site for D-ribose 5-phosphate. Lysine 81 serves as the catalytic Schiff-base intermediate with D-ribose 5-phosphate. A D-ribose 5-phosphate-binding site is contributed by glycine 153. Position 165 (arginine 165) interacts with D-glyceraldehyde 3-phosphate. Residues glycine 219 and 240–241 contribute to the D-ribose 5-phosphate site; that span reads GS.

This sequence belongs to the PdxS/SNZ family. In the presence of PdxT, forms a dodecamer of heterodimers.

The enzyme catalyses aldehydo-D-ribose 5-phosphate + D-glyceraldehyde 3-phosphate + L-glutamine = pyridoxal 5'-phosphate + L-glutamate + phosphate + 3 H2O + H(+). Its pathway is cofactor biosynthesis; pyridoxal 5'-phosphate biosynthesis. Functionally, catalyzes the formation of pyridoxal 5'-phosphate from ribose 5-phosphate (RBP), glyceraldehyde 3-phosphate (G3P) and ammonia. The ammonia is provided by the PdxT subunit. Can also use ribulose 5-phosphate and dihydroxyacetone phosphate as substrates, resulting from enzyme-catalyzed isomerization of RBP and G3P, respectively. This is Pyridoxal 5'-phosphate synthase subunit PdxS from Methanococcus maripaludis (strain C6 / ATCC BAA-1332).